Reading from the N-terminus, the 231-residue chain is MKQYNDLFKIIHREGYIFIASFALVSFLLASFNEKLGCIGCIATAWCIYFFRNPDRFVPISDDLVISPADGIIQEIKEALPPPELGLGDVEMIRVSIFLNLFNVHVNRIPANGKILALHYNPGKFFNASLDKASIYNERQSVLMEMAQGQKIVFVQIAGLIARRIVCDLEEGNEVKTGERYGIIRFGSRVDVYLPLKTALLVSKGQTAIGGETIIADFGRKKTTEFKFERK.

Ser188 functions as the Schiff-base intermediate with substrate; via pyruvic acid in the catalytic mechanism. Ser188 is subject to Pyruvic acid (Ser); by autocatalysis.

This sequence belongs to the phosphatidylserine decarboxylase family. PSD-A subfamily. In terms of assembly, heterodimer of a large membrane-associated beta subunit and a small pyruvoyl-containing alpha subunit. Requires pyruvate as cofactor. Is synthesized initially as an inactive proenzyme. Formation of the active enzyme involves a self-maturation process in which the active site pyruvoyl group is generated from an internal serine residue via an autocatalytic post-translational modification. Two non-identical subunits are generated from the proenzyme in this reaction, and the pyruvate is formed at the N-terminus of the alpha chain, which is derived from the carboxyl end of the proenzyme. The post-translation cleavage follows an unusual pathway, termed non-hydrolytic serinolysis, in which the side chain hydroxyl group of the serine supplies its oxygen atom to form the C-terminus of the beta chain, while the remainder of the serine residue undergoes an oxidative deamination to produce ammonia and the pyruvoyl prosthetic group on the alpha chain.

It is found in the cell membrane. The enzyme catalyses a 1,2-diacyl-sn-glycero-3-phospho-L-serine + H(+) = a 1,2-diacyl-sn-glycero-3-phosphoethanolamine + CO2. The protein operates within phospholipid metabolism; phosphatidylethanolamine biosynthesis; phosphatidylethanolamine from CDP-diacylglycerol: step 2/2. Catalyzes the formation of phosphatidylethanolamine (PtdEtn) from phosphatidylserine (PtdSer). This is Phosphatidylserine decarboxylase proenzyme from Rickettsia rickettsii (strain Iowa).